Consider the following 4660-residue polypeptide: Low-density lipoprotein receptor-related protein 2 (4660 aa).

The signal sequence occupies residues 1–25 (MERGAAAAAWMLLLAIAACLEPVSS). Over 26 to 4425 (QECGSGNFRC…LSRGIPPGTT (4400 aa)) the chain is Extracellular. 6 consecutive LDL-receptor class A domains span residues 27–63 (ECGS…IGCP), 66–104 (SCES…QNCA), 107–143 (TCSA…RNCH), 141–180 (NCHY…ANCT), 182–218 (LCSQ…RNCN), and 221–257 (TCGG…DGCE). Cystine bridges form between cysteine 28/cysteine 40, cysteine 35/cysteine 53, cysteine 47/cysteine 62, cysteine 67/cysteine 80, cysteine 74/cysteine 93, cysteine 87/cysteine 103, cysteine 108/cysteine 120, cysteine 115/cysteine 133, cysteine 127/cysteine 142, cysteine 142/cysteine 157, cysteine 152/cysteine 170, cysteine 164/cysteine 179, cysteine 183/cysteine 195, cysteine 190/cysteine 208, cysteine 202/cysteine 217, cysteine 222/cysteine 234, cysteine 229/cysteine 247, and cysteine 241/cysteine 256. 2 N-linked (GlcNAc...) asparagine glycosylation sites follow: asparagine 159 and asparagine 178. Asparagine 259 carries N-linked (GlcNAc...) asparagine glycosylation. Residues 264–307 (RCYPREWACPGSGRCISIDKVCDGVPDCPEGDDENNVTSGRTCG) enclose the LDL-receptor class A 7 domain. 3 disulfides stabilise this stretch: cysteine 265-cysteine 278, cysteine 272-cysteine 291, and cysteine 285-cysteine 306. N-linked (GlcNAc...) asparagine glycosylation is found at asparagine 299 and asparagine 340. The region spanning 347–382 (DFDDCQIWGICDQKCENRQGRHQCLCEEGYILERGQ) is the EGF-like 1; calcium-binding domain. Cystine bridges form between cysteine 351–cysteine 361 and cysteine 357–cysteine 370. LDL-receptor class B repeat units follow at residues 435–477 (HRVF…DWIN), 478–520 (NKLY…DPTV), 521–567 (GYLF…DLVS), and 568–612 (KRVY…FEEH). An N-linked (GlcNAc...) asparagine glycan is attached at asparagine 462. An N-linked (GlcNAc...) asparagine glycan is attached at asparagine 657. 4 LDL-receptor class B repeats span residues 752-794 (STVF…DWIS), 795-836 (RNLY…HPTA), 837-880 (GYMF…DWSA), and 881-924 (SRLY…FKDN). N-linked (GlcNAc...) asparagine glycosylation occurs at asparagine 865. In terms of domain architecture, LDL-receptor class A 8 spans 1024 to 1060 (QCGSLSFPCNNGKCVPSFFRCDGVDDCHDNSDEHQCG). Disulfide bonds link cysteine 1025–cysteine 1037, cysteine 1032–cysteine 1050, and cysteine 1044–cysteine 1059. An N-linked (GlcNAc...) asparagine glycan is attached at asparagine 1063. 7 consecutive LDL-receptor class A domains span residues 1065 to 1102 (TCSP…QNCP), 1109 to 1145 (TCPS…KNCQ), 1149 to 1185 (TCQP…AGCV), 1187 to 1224 (NCTS…AGCP), 1230 to 1268 (MCHP…TGCV), 1271 to 1307 (TCSP…KDCP), and 1312 to 1350 (HCPS…PLCN). 9 disulfide bridges follow: cysteine 1066–cysteine 1079, cysteine 1073–cysteine 1092, cysteine 1086–cysteine 1101, cysteine 1110–cysteine 1122, cysteine 1117–cysteine 1135, cysteine 1129–cysteine 1144, cysteine 1150–cysteine 1162, cysteine 1157–cysteine 1175, and cysteine 1169–cysteine 1184. Residues tryptophan 1127, aspartate 1130, aspartate 1132, aspartate 1134, aspartate 1140, and glutamate 1141 each coordinate Ca(2+). Asparagine 1187 is a glycosylation site (N-linked (GlcNAc...) asparagine). 18 disulfide bridges follow: cysteine 1188–cysteine 1201, cysteine 1195–cysteine 1214, cysteine 1208–cysteine 1223, cysteine 1231–cysteine 1244, cysteine 1238–cysteine 1257, cysteine 1251–cysteine 1267, cysteine 1272–cysteine 1284, cysteine 1279–cysteine 1297, cysteine 1291–cysteine 1306, cysteine 1313–cysteine 1326, cysteine 1320–cysteine 1339, cysteine 1333–cysteine 1349, cysteine 1354–cysteine 1365, cysteine 1361–cysteine 1374, cysteine 1376–cysteine 1389, cysteine 1395–cysteine 1405, cysteine 1401–cysteine 1414, and cysteine 1416–cysteine 1429. Ca(2+) is bound by residues tyrosine 1206, aspartate 1209, valine 1211, aspartate 1213, aspartate 1219, and glutamate 1220. N-linked (GlcNAc...) asparagine glycosylation is found at asparagine 1328 and asparagine 1341. The EGF-like 2 domain maps to 1350 to 1390 (NQDSCSHFNGGCTHQCMQGPFGATCLCPLGYQLANDTKTCE). A glycan (N-linked (GlcNAc...) asparagine) is linked at asparagine 1384. Positions 1391–1430 (DINECDIPGFCSQHCVNMRGSFRCACDPEYTLESDGRTCK) constitute an EGF-like 3; calcium-binding domain. Asparagine 1451, asparagine 1497, and asparagine 1551 each carry an N-linked (GlcNAc...) asparagine glycan. 5 LDL-receptor class B repeats span residues 1479 to 1521 (GRVF…DWIG), 1522 to 1564 (RNLY…DPRM), 1567 to 1610 (NVMF…DYPN), 1611 to 1655 (RLIY…FEDF), and 1656 to 1696 (VYWT…IHPS). Residues asparagine 1676, asparagine 1733, and asparagine 1811 are each glycosylated (N-linked (GlcNAc...) asparagine). LDL-receptor class B repeat units follow at residues 1791-1833 (QFIY…DWVS), 1834-1883 (RNIY…DPAR), 1884-1931 (GKLY…DIQE), 1932-1973 (QKLY…YGSF), 1974-2014 (LYYS…YHRR), 2108-2157 (GFIY…DWAA), 2158-2202 (GNLY…DPKH), 2203-2246 (RYLF…DHDT), and 2247-2290 (GYIY…FGES). N-linked (GlcNAc...) asparagine glycans are attached at residues asparagine 2134, asparagine 2178, and asparagine 2225. A glycan (N-linked (GlcNAc...) asparagine) is linked at asparagine 2396. 5 LDL-receptor class B repeats span residues 2432-2478 (NRIF…DWIN), 2479-2519 (RRIY…DPCR), 2520-2563 (GYMY…DLET), 2564-2605 (DLLY…YGQY), and 2606-2647 (IYWT…VVKT). Asparagine 2488 and asparagine 2548 each carry an N-linked (GlcNAc...) asparagine glycan. 10 consecutive LDL-receptor class A domains span residues 2700–2738 (RCNQ…TVCA), 2741–2777 (TCRS…AGCL), 2780–2819 (NCNS…KNCP), 2822–2861 (TCPP…IYCA), 2864–2902 (TCRS…DTCG), 2907–2946 (TCRA…HHCE), 2949–2991 (NCSS…QNCT), 2994–3030 (TCSA…RGCS), 3033–3071 (PCHA…HLCH), and 3076–3112 (TCPL…KGCG). Cystine bridges form between cysteine 2701/cysteine 2713, cysteine 2708/cysteine 2726, cysteine 2720/cysteine 2737, cysteine 2742/cysteine 2754, cysteine 2749/cysteine 2767, cysteine 2761/cysteine 2776, cysteine 2781/cysteine 2794, cysteine 2789/cysteine 2807, cysteine 2801/cysteine 2818, cysteine 2823/cysteine 2836, cysteine 2830/cysteine 2849, cysteine 2843/cysteine 2860, cysteine 2865/cysteine 2878, cysteine 2872/cysteine 2891, cysteine 2885/cysteine 2901, cysteine 2908/cysteine 2920, cysteine 2915/cysteine 2933, and cysteine 2927/cysteine 2945. The N-linked (GlcNAc...) asparagine glycan is linked to asparagine 2782. Residue asparagine 2810 is glycosylated (N-linked (GlcNAc...) asparagine). N-linked (GlcNAc...) asparagine glycosylation occurs at asparagine 2949. 18 cysteine pairs are disulfide-bonded: cysteine 2950-cysteine 2967, cysteine 2957-cysteine 2980, cysteine 2974-cysteine 2990, cysteine 2995-cysteine 3007, cysteine 3002-cysteine 3020, cysteine 3014-cysteine 3029, cysteine 3034-cysteine 3046, cysteine 3041-cysteine 3059, cysteine 3053-cysteine 3070, cysteine 3077-cysteine 3089, cysteine 3084-cysteine 3102, cysteine 3096-cysteine 3111, cysteine 3116-cysteine 3128, cysteine 3124-cysteine 3137, cysteine 3139-cysteine 3152, cysteine 3158-cysteine 3169, cysteine 3165-cysteine 3178, and cysteine 3180-cysteine 3193. N-linked (GlcNAc...) asparagine glycosylation is present at asparagine 2989. The EGF-like 4 domain maps to 3112–3153 (GINECLDSSISRCDHNCTDTITSFYCSCLPGYKLMSDKRSCV). A glycan (N-linked (GlcNAc...) asparagine) is linked at asparagine 3127. One can recognise an EGF-like 5; calcium-binding domain in the interval 3154-3194 (DIDECKESPQLCSQKCENVVGSYICKCAPGYIREPDGKSCR). N-linked (GlcNAc...) asparagine glycosylation is found at asparagine 3213, asparagine 3259, asparagine 3317, and asparagine 3357. LDL-receptor class B repeat units lie at residues 3241 to 3283 (KRLY…DWVS), 3284 to 3326 (RKLY…EHPR), 3335 to 3378 (GHVY…DYTN), 3379 to 3421 (DLLY…FEDT), and 3422 to 3462 (VFWT…YHPY). Asparagine 3448 is a glycosylation site (N-linked (GlcNAc...) asparagine). 8 LDL-receptor class A domains span residues 3513-3551 (MCSS…DLCP), 3554-3592 (FCRL…VLCE), 3595-3633 (RCES…SHCA), 3636-3674 (TCRP…DECT), 3679-3717 (NCDN…QGCE), 3720-3757 (PCHP…ENCV), 3760-3796 (ECSE…RDCE), and 3799-3835 (TCHP…SACP). 24 cysteine pairs are disulfide-bonded: cysteine 3514-cysteine 3527, cysteine 3521-cysteine 3540, cysteine 3534-cysteine 3550, cysteine 3555-cysteine 3567, cysteine 3562-cysteine 3580, cysteine 3574-cysteine 3591, cysteine 3596-cysteine 3608, cysteine 3603-cysteine 3621, cysteine 3615-cysteine 3632, cysteine 3637-cysteine 3649, cysteine 3644-cysteine 3662, cysteine 3656-cysteine 3673, cysteine 3680-cysteine 3694, cysteine 3688-cysteine 3707, cysteine 3701-cysteine 3716, cysteine 3721-cysteine 3734, cysteine 3729-cysteine 3747, cysteine 3741-cysteine 3756, cysteine 3761-cysteine 3773, cysteine 3768-cysteine 3786, cysteine 3780-cysteine 3795, cysteine 3800-cysteine 3812, cysteine 3807-cysteine 3825, and cysteine 3819-cysteine 3834. The N-linked (GlcNAc...) asparagine glycan is linked to asparagine 3566. Asparagine 3682 carries an N-linked (GlcNAc...) asparagine glycan. Asparagine 3840 carries N-linked (GlcNAc...) asparagine glycosylation. LDL-receptor class A domains are found at residues 3843–3881 (YCPA…HLCF), 3884–3923 (PCES…EHCR), and 3929–3965 (PCTD…TGCN). Cystine bridges form between cysteine 3844–cysteine 3856, cysteine 3851–cysteine 3869, cysteine 3863–cysteine 3880, cysteine 3885–cysteine 3898, cysteine 3893–cysteine 3911, cysteine 3905–cysteine 3922, cysteine 3930–cysteine 3942, cysteine 3937–cysteine 3955, and cysteine 3949–cysteine 3964. The EGF-like 6 domain occupies 3968-4003 (DNRTCAENICEQNCTQLSSGGFICSCRPGFKPSTSD). 2 N-linked (GlcNAc...) asparagine glycosylation sites follow: asparagine 3969 and asparagine 3980. 5 disulfides stabilise this stretch: cysteine 3972–cysteine 3981, cysteine 3977–cysteine 3991, cysteine 4013–cysteine 4023, cysteine 4019–cysteine 4032, and cysteine 4034–cysteine 4049. The region spanning 4009–4050 (DINECEEFGICPQSCRNSKGSYECFCVDGFKSMSTHYGERCA) is the EGF-like 7; calcium-binding domain. Asparagine 4070 carries N-linked (GlcNAc...) asparagine glycosylation. 3 LDL-receptor class B repeats span residues 4156-4198 (RHIY…NPKL), 4199-4242 (GLMF…DYLN), and 4244-4285 (DRVY…FEDK). Residue asparagine 4329 is glycosylated (N-linked (GlcNAc...) asparagine). The region spanning 4379 to 4413 (MPPPCRCMHGGNCYFDENELPKCKCSSGYSGEYCE) is the EGF-like 8 domain. Disulfide bonds link cysteine 4383-cysteine 4391, cysteine 4385-cysteine 4401, and cysteine 4403-cysteine 4412. A helical transmembrane segment spans residues 4426-4446 (MAVLLTFVIVIIVGALVLVGL). The Cytoplasmic segment spans residues 4447-4660 (FHYRKTGSLL…ANLVKEDSDV (214 aa)). An SH3-binding motif is present at residues 4454 to 4463 (SLLPTLPKLP). A PxLPxI/L motif 1; mediates interaction with ANKRA2 motif is present at residues 4457-4462 (PTLPKL). The PxLPxI/L motif 2; mediates interaction with ANKRA2 motif lies at 4460–4465 (PKLPSL). Phosphoserine is present on residues serine 4464 and serine 4467. An Endocytosis signal motif is present at residues 4522 to 4527 (FENPMY). The disordered stretch occupies residues 4559 to 4582 (NYGRPIDPSEIVPEPKPASPGADE). Serine 4577 is subject to Phosphoserine. Positions 4597–4610 (QTTNFENPIYAEMD) are interaction with DAB2. An NPXY motif motif is present at residues 4603–4606 (NPIY). An SH2-binding motif is present at residues 4606-4609 (YAEM). The interval 4617–4660 (VAVAPPPSPSLPAKASKRNLTPGYTATEDTFKDTANLVKEDSDV) is disordered. Positions 4619–4630 (VAPPPSPSLPAK) match the SH3-binding motif. Serine 4624 carries the phosphoserine modification. Residues 4634 to 4644 (RNLTPGYTATE) are compositionally biased toward polar residues. Threonine 4637 is subject to Phosphothreonine. Serine 4658 is modified (phosphoserine).

It belongs to the LDLR family. Binds plasminogen, extracellular matrix components, plasminogen activator-plasminogen activator inhibitor type I complex, apolipoprotein E-enriched beta-VLDL, lipoprotein lipase, lactoferrin, CLU/clusterin and calcium. Forms a multimeric complex together with LRPAP1. Interacts (via PxLPxI/L motif) with ANKRA2 (via ankyrin repeats). Interacts with LRP2BP. Interacts (via NPXY motif) with DAB2; the interaction is not affected by tyrosine phosphorylation of the NPXY motif. Interacts with MB. Interacts with BMP4. Interacts with the Sonic hedgehog protein N-product which is the active product of SHH. Interacts with CST3 in a calcium-dependent manner. Interacts with the vitamin-D binding protein GC/DBP. Interacts with sex hormone-binding protein SHBG. Interacts with angiotensin-2. Also interacts with angiotensin 1-7. Interacts with APOM. Interacts with selenoprotein SEPP1. Interacts with LEP. Interacts with ALB. Interacts with the antiapoptotic protein BIRC5/survivin. Interacts with matrix metalloproteinase MMP2 in complex with metalloproteinase inhibitor TIMP1. In neurons, forms a trimeric complex with APP and APPB1/FE65. Interacts with LDLRAP1/ARH; mediates trafficking of LRP2 to the endocytic recycling compartment. Does not interact with beta-amyloid protein 40 alone but interacts with the complex composed of beta-amyloid protein 40 and CLU/APOJ. Interacts with MDK. In terms of processing, a fraction undergoes proteolytic cleavage of the extracellular domain at the cell membrane to generate a cytoplasmic tail fragment. This is internalized into the early endosome from where it trafficks in an LDLRAP1/ARH-dependent manner to the endocytic recycling compartment (ERC). In the ERC, it is further cleaved by gamma-secretase to release a fragment which translocates to the nucleus and mediates transcriptional repression. Post-translationally, N-glycosylation is required for ligand binding. In terms of tissue distribution, in the inner ear, expressed in the lumen of the endolymphatic sac where it localizes to macrophage-like cells as well as to mitochondria-rich and ribosome-rich epithelial cells (at protein level). In the inner ear, expressed in marginal cells of the stria vascularis, epithelial cells at the spiral prominence, epithelial cells of Reissner's membrane facing the cochlear duct, and Kolliker's organ (at protein level). Expressed in the choroid plexus epithelium in the brain (at protein level). In the brain, also expressed in astrocytes (at protein level). Expression also detected in epithelial cells of the kidney glomerulus and proximal tubule, lung, epididymis and yolk sac.

The protein localises to the apical cell membrane. The protein resides in the endosome lumen. Its subcellular location is the membrane. It is found in the clathrin-coated pit. It localises to the cell projection. The protein localises to the dendrite. The protein resides in the axon. Its function is as follows. Multiligand endocytic receptor. Acts together with CUBN to mediate endocytosis of high-density lipoproteins. Mediates receptor-mediated uptake of polybasic drugs such as aprotinin, aminoglycosides and polymyxin B. In the kidney, mediates the tubular uptake and clearance of leptin. Also mediates transport of leptin across the blood-brain barrier through endocytosis at the choroid plexus epithelium. Endocytosis of leptin in neuronal cells is required for hypothalamic leptin signaling and leptin-mediated regulation of feeding and body weight. Mediates endocytosis and subsequent lysosomal degradation of CST3 in kidney proximal tubule cells. Mediates renal uptake of 25-hydroxyvitamin D3 in complex with the vitamin D3 transporter GC/DBP. Mediates renal uptake of metallothionein-bound heavy metals. Together with CUBN, mediates renal reabsorption of myoglobin. Mediates renal uptake and subsequent lysosomal degradation of APOM. Plays a role in kidney selenium homeostasis by mediating renal endocytosis of selenoprotein SEPP1. Mediates renal uptake of the antiapoptotic protein BIRC5/survivin which may be important for functional integrity of the kidney. Mediates renal uptake of matrix metalloproteinase MMP2 in complex with metalloproteinase inhibitor TIMP1. Mediates endocytosis of Sonic hedgehog protein N-product (ShhN), the active product of SHH. Also mediates ShhN transcytosis. In the embryonic neuroepithelium, mediates endocytic uptake and degradation of BMP4, is required for correct SHH localization in the ventral neural tube and plays a role in patterning of the ventral telencephalon. Required at the onset of neurulation to sequester SHH on the apical surface of neuroepithelial cells of the rostral diencephalon ventral midline and to control PTCH1-dependent uptake and intracellular trafficking of SHH. During neurulation, required in neuroepithelial cells for uptake of folate bound to the folate receptor FOLR1 which is necessary for neural tube closure. In the adult brain, negatively regulates BMP signaling in the subependymal zone which enables neurogenesis to proceed. In astrocytes, mediates endocytosis of ALB which is required for the synthesis of the neurotrophic factor oleic acid. Involved in neurite branching. During optic nerve development, required for SHH-mediated migration and proliferation of oligodendrocyte precursor cells. Mediates endocytic uptake and clearance of SHH in the retinal margin which protects retinal progenitor cells from mitogenic stimuli and keeps them quiescent. Plays a role in reproductive organ development by mediating uptake in reproductive tissues of androgen and estrogen bound to the sex hormone binding protein SHBG. Mediates endocytosis of angiotensin-2. Also mediates endocytosis of angiotensin 1-7. Binds to the complex composed of beta-amyloid protein 40 and CLU/APOJ and mediates its endocytosis and lysosomal degradation. Required for embryonic heart development. Required for normal hearing, possibly through interaction with estrogen in the inner ear. In Rattus norvegicus (Rat), this protein is Low-density lipoprotein receptor-related protein 2 (Lrp2).